Consider the following 448-residue polypeptide: CCA-adding enzyme (448 aa).

ATP is bound by residues Ser-52 and Lys-55. Residues Ser-52 and Lys-55 each contribute to the CTP site. Positions 64, 66, and 118 each coordinate Mg(2+). ATP is bound by residues His-141, Lys-160, and Tyr-169. Residues His-141, Lys-160, and Tyr-169 each coordinate CTP.

The protein belongs to the tRNA nucleotidyltransferase/poly(A) polymerase family. Archaeal CCA-adding enzyme subfamily. As to quaternary structure, homodimer. Mg(2+) is required as a cofactor.

The catalysed reaction is a tRNA precursor + 2 CTP + ATP = a tRNA with a 3' CCA end + 3 diphosphate. It carries out the reaction a tRNA with a 3' CCA end + 2 CTP + ATP = a tRNA with a 3' CCACCA end + 3 diphosphate. Functionally, catalyzes the addition and repair of the essential 3'-terminal CCA sequence in tRNAs without using a nucleic acid template. Adds these three nucleotides in the order of C, C, and A to the tRNA nucleotide-73, using CTP and ATP as substrates and producing inorganic pyrophosphate. tRNA 3'-terminal CCA addition is required both for tRNA processing and repair. Also involved in tRNA surveillance by mediating tandem CCA addition to generate a CCACCA at the 3' terminus of unstable tRNAs. While stable tRNAs receive only 3'-terminal CCA, unstable tRNAs are marked with CCACCA and rapidly degraded. In Pyrococcus abyssi (strain GE5 / Orsay), this protein is CCA-adding enzyme.